Here is a 190-residue protein sequence, read N- to C-terminus: GTP cyclohydrolase 1 (190 aa).

Cysteine 75, histidine 78, and cysteine 146 together coordinate Zn(2+).

This sequence belongs to the GTP cyclohydrolase I family. Homomer.

The enzyme catalyses GTP + H2O = 7,8-dihydroneopterin 3'-triphosphate + formate + H(+). Its pathway is cofactor biosynthesis; 7,8-dihydroneopterin triphosphate biosynthesis; 7,8-dihydroneopterin triphosphate from GTP: step 1/1. The protein is GTP cyclohydrolase 1 of Campylobacter concisus (strain 13826).